A 636-amino-acid chain; its full sequence is Chaperone protein HtpG (636 aa).

The tract at residues 1–345 (MSESATANAN…SSDLPLNVSR (345 aa)) is a; substrate-binding. The b stretch occupies residues 346–562 (EILQQSKDID…EHDPSGNLAR (217 aa)). Residues 563-636 (LMKAAGQPMP…NDLMMALSAK (74 aa)) form a c region.

It belongs to the heat shock protein 90 family. As to quaternary structure, homodimer.

Its subcellular location is the cytoplasm. Functionally, molecular chaperone. Has ATPase activity. The polypeptide is Chaperone protein HtpG (Dechloromonas aromatica (strain RCB)).